Here is a 299-residue protein sequence, read N- to C-terminus: Pyridoxal 5'-phosphate synthase subunit PdxS (299 aa).

Asp-24 contacts D-ribose 5-phosphate. Lys-81 (schiff-base intermediate with D-ribose 5-phosphate) is an active-site residue. Gly-153 is a binding site for D-ribose 5-phosphate. A D-glyceraldehyde 3-phosphate-binding site is contributed by Arg-165. D-ribose 5-phosphate is bound by residues Gly-219 and Gly-240–Ser-241.

This sequence belongs to the PdxS/SNZ family. As to quaternary structure, in the presence of PdxT, forms a dodecamer of heterodimers.

It carries out the reaction aldehydo-D-ribose 5-phosphate + D-glyceraldehyde 3-phosphate + L-glutamine = pyridoxal 5'-phosphate + L-glutamate + phosphate + 3 H2O + H(+). The protein operates within cofactor biosynthesis; pyridoxal 5'-phosphate biosynthesis. Functionally, catalyzes the formation of pyridoxal 5'-phosphate from ribose 5-phosphate (RBP), glyceraldehyde 3-phosphate (G3P) and ammonia. The ammonia is provided by the PdxT subunit. Can also use ribulose 5-phosphate and dihydroxyacetone phosphate as substrates, resulting from enzyme-catalyzed isomerization of RBP and G3P, respectively. In Methanococcus maripaludis (strain C6 / ATCC BAA-1332), this protein is Pyridoxal 5'-phosphate synthase subunit PdxS.